Reading from the N-terminus, the 179-residue chain is Large ribosomal subunit protein uL5 (179 aa).

Belongs to the universal ribosomal protein uL5 family. In terms of assembly, part of the 50S ribosomal subunit; part of the 5S rRNA/L5/L18/L25 subcomplex. Contacts the 5S rRNA and the P site tRNA. Forms a bridge to the 30S subunit in the 70S ribosome.

This is one of the proteins that bind and probably mediate the attachment of the 5S RNA into the large ribosomal subunit, where it forms part of the central protuberance. In the 70S ribosome it contacts protein S13 of the 30S subunit (bridge B1b), connecting the 2 subunits; this bridge is implicated in subunit movement. Contacts the P site tRNA; the 5S rRNA and some of its associated proteins might help stabilize positioning of ribosome-bound tRNAs. The chain is Large ribosomal subunit protein uL5 from Vibrio cholerae serotype O1 (strain ATCC 39541 / Classical Ogawa 395 / O395).